A 493-amino-acid polypeptide reads, in one-letter code: Glutamyl-tRNA(Gln) amidotransferase subunit A (493 aa).

Active-site charge relay system residues include K79 and S159. The Acyl-ester intermediate role is filled by S183.

The protein belongs to the amidase family. GatA subfamily. As to quaternary structure, heterotrimer of A, B and C subunits.

It carries out the reaction L-glutamyl-tRNA(Gln) + L-glutamine + ATP + H2O = L-glutaminyl-tRNA(Gln) + L-glutamate + ADP + phosphate + H(+). Allows the formation of correctly charged Gln-tRNA(Gln) through the transamidation of misacylated Glu-tRNA(Gln) in organisms which lack glutaminyl-tRNA synthetase. The reaction takes place in the presence of glutamine and ATP through an activated gamma-phospho-Glu-tRNA(Gln). The sequence is that of Glutamyl-tRNA(Gln) amidotransferase subunit A from Sinorhizobium medicae (strain WSM419) (Ensifer medicae).